A 1217-amino-acid polypeptide reads, in one-letter code: Myosin-1 (1217 aa).

The interval 1-26 (MAILKRTNRAKAATAAAPNSTGKSNG) is disordered. Residues 10-19 (AKAATAAAPN) are compositionally biased toward low complexity. Residues 17 to 24 (APNSTGKS) and 133 to 140 (GESGAGKT) each bind ATP. Residues 40–720 (VGVDDLTLLS…TLFALEDMRD (681 aa)) enclose the Myosin motor domain. S361 carries the post-translational modification Phosphoserine. Y363 is modified (phosphotyrosine). The tract at residues 409–491 (SIGILDIYGF…PGLFAAMNDA (83 aa)) is actin-binding. 2 IQ domains span residues 724–744 (DTMATRIQRAWRSYVRRRSEA) and 745–770 (AACIQKLWNRNKVNMELERVRNEGTK). S742 bears the Phosphoserine mark. In terms of domain architecture, TH1 spans 778–964 (RRRYSILGSR…TIHVGTGLPP (187 aa)). Position 782 is a phosphoserine (S782). The disordered stretch occupies residues 961-1105 (GLPPTSKSKP…PPPPPPPAEV (145 aa)). Residues 998–1013 (KPVSMPAAKSKPAPMA) show a composition bias toward low complexity. Over residues 1015 to 1025 (PVSTAQQTQNR) the composition is skewed to polar residues. A compositionally biased stretch (low complexity) spans 1045 to 1075 (TSTTTTIKQATTVSASKPAPSTVTSAASSPS). The segment covering 1076-1088 (NISKPSAPVANNV) has biased composition (polar residues). The segment covering 1093 to 1103 (AVPPPPPPPPA) has biased composition (pro residues). The 60-residue stretch at 1106–1165 (EKKDLYLALYDFAGRSPNEMTIKKDEIIEIVQKEPSGWWLALKNGAEGWVPATYVTEYKG) folds into the SH3 domain. Position 1211 is a phosphoserine (S1211).

The protein belongs to the TRAFAC class myosin-kinesin ATPase superfamily. Myosin family. In terms of assembly, interacts with cam2. Interacts (via SH3 domain) with vrp1. Post-translationally, phosphorylation of the TEDS site (Ser-361) is required for the polarization of the actin cytoskeleton. Phosphorylation probably activates the myosin-I ATPase activity.

The protein resides in the cytoplasm. It is found in the cytoskeleton. Its subcellular location is the actin patch. Its function is as follows. Type-I myosin implicated in the organization of the actin cytoskeleton. Required for proper actin cytoskeleton polarization. At the cell cortex, assembles in patch-like structures together with proteins from the actin-polymerizing machinery and promotes actin assembly. Functions as actin nucleation-promoting factor (NPF) for the Arp2/3 complex. Contributes to proper septation by transporting vesicles containing septal material to the division site and is involved in the formation of sterol-rich membrane domains at the cell division site. Required also for mating. In Schizosaccharomyces pombe (strain 972 / ATCC 24843) (Fission yeast), this protein is Myosin-1 (myo1).